The following is a 163-amino-acid chain: PTS system fructose-specific EIIB component (163 aa).

A PTS EIIB type-4 domain is found at 1 to 163 (MMNIVLARID…FVQILRNVTK (163 aa)). Residue His15 is the Pros-phosphohistidine intermediate of the active site. At His15 the chain carries Phosphohistidine; by EIIA.

It localises to the cytoplasm. It catalyses the reaction D-fructose(out) + N(pros)-phospho-L-histidyl-[protein] = D-fructose 1-phosphate(in) + L-histidyl-[protein]. The phosphoenolpyruvate-dependent sugar phosphotransferase system (sugar PTS), a major carbohydrate active -transport system, catalyzes the phosphorylation of incoming sugar substrates concomitantly with their translocation across the cell membrane. The enzyme II LevDE PTS system is involved in fructose transport. Functionally, levD and LevE act as negative regulators of the levanase operon. They may be involved in a PTS-mediated phosphorylation of a regulator. The chain is PTS system fructose-specific EIIB component from Bacillus subtilis (strain 168).